Reading from the N-terminus, the 35-residue chain is MQVNELGFLASLLFVLVPSVFLIVLYIQTASREAK.

A helical transmembrane segment spans residues 7–27; the sequence is GFLASLLFVLVPSVFLIVLYI.

It belongs to the PsbM family. PSII is composed of 1 copy each of membrane proteins PsbA, PsbB, PsbC, PsbD, PsbE, PsbF, PsbH, PsbI, PsbJ, PsbK, PsbL, PsbM, PsbT, PsbX, PsbY, PsbZ, Psb30/Ycf12, peripheral proteins PsbO, CyanoQ (PsbQ), PsbU, PsbV and a large number of cofactors. It forms dimeric complexes.

The protein resides in the cellular thylakoid membrane. Functionally, one of the components of the core complex of photosystem II (PSII). PSII is a light-driven water:plastoquinone oxidoreductase that uses light energy to abstract electrons from H(2)O, generating O(2) and a proton gradient subsequently used for ATP formation. It consists of a core antenna complex that captures photons, and an electron transfer chain that converts photonic excitation into a charge separation. This subunit is found at the monomer-monomer interface. This is Photosystem II reaction center protein M from Synechococcus elongatus (strain ATCC 33912 / PCC 7942 / FACHB-805) (Anacystis nidulans R2).